We begin with the raw amino-acid sequence, 407 residues long: Imidazolonepropionase (407 aa).

Positions 74 and 76 each coordinate Fe(3+). Positions 74 and 76 each coordinate Zn(2+). Residues Arg-83, Tyr-146, and His-179 each contribute to the 4-imidazolone-5-propanoate site. An N-formimidoyl-L-glutamate-binding site is contributed by Tyr-146. His-244 is a binding site for Fe(3+). His-244 contacts Zn(2+). Residue Gln-247 participates in 4-imidazolone-5-propanoate binding. Asp-319 is a binding site for Fe(3+). Asp-319 provides a ligand contact to Zn(2+). 2 residues coordinate N-formimidoyl-L-glutamate: Asn-321 and Gly-323. Thr-324 contacts 4-imidazolone-5-propanoate.

The protein belongs to the metallo-dependent hydrolases superfamily. HutI family. The cofactor is Zn(2+). Fe(3+) serves as cofactor.

The protein localises to the cytoplasm. It carries out the reaction 4-imidazolone-5-propanoate + H2O = N-formimidoyl-L-glutamate. Its pathway is amino-acid degradation; L-histidine degradation into L-glutamate; N-formimidoyl-L-glutamate from L-histidine: step 3/3. Its function is as follows. Catalyzes the hydrolytic cleavage of the carbon-nitrogen bond in imidazolone-5-propanoate to yield N-formimidoyl-L-glutamate. It is the third step in the universal histidine degradation pathway. This chain is Imidazolonepropionase, found in Salmonella arizonae (strain ATCC BAA-731 / CDC346-86 / RSK2980).